A 586-amino-acid chain; its full sequence is ATPase family AAA domain-containing protein 3 (586 aa).

A disordered region spans residues 1–52; sequence MSWLFGIKGSKGEGTGPPLPLPPVQPGGEGSGDGGAGDRPGPKDKWSNFDPT. S2 is modified (N-acetylserine). The interval 2–49 is required for interaction with the inner surface of the mitochondrial outer membrane; the sequence is SWLFGIKGSKGEGTGPPLPLPPVQPGGEGSGDGGAGDRPGPKDKWSNF. The Mitochondrial intermembrane portion of the chain corresponds to 2–245; the sequence is SWLFGIKGSK…FRAFVTDWDK (244 aa). The span at 27-38 shows a compositional bias: gly residues; the sequence is GGEGSGDGGAGD. A coiled-coil region spans residues 55-218; the sequence is ERAAKAAREL…QIRLKAAEHR (164 aa). The chain crosses the membrane as a helical span at residues 246–262; the sequence is VTATVAGLTLLAVGIYS. Topologically, residues 263 to 586 are mitochondrial matrix; it reads AKNATSVAGR…QPPTLRTQAE (324 aa). The tract at residues 289-304 is S100B-binding; the sequence is RITVLEALRHPIQVSR. Residue 351-358 participates in ATP binding; the sequence is GPPGTGKT. K490 carries the N6-acetyllysine; alternate modification. K490 is subject to N6-succinyllysine; alternate. Residues K494 and K512 each carry the N6-acetyllysine modification.

Belongs to the AAA ATPase family. Can form homooligomers. Homodimer formation at the N-terminus may be regulated by ATP and is required for the interaction with the inner surface of the mitochondrial outer membrane and correct mitochondrial homeostasis. Interacts with components of the mitochondrial ribosome and with other proteins involved in mitochondrial RNA metabolism. May also interact with protein involved in lipid metabolism, including STARD9. May interact with FAM210A. Interacts with GADD45GIP1. Interacts with S100B in a Ca(+2)- and Zn(+2)-dependent manner; this interaction probably occurs in the cytosol prior to mitochondrial targeting. S100B could assist ATAD3A cytoplasmic processing, preventing aggregation and favoring mitochondrial localization. Interacts with HSP60/HSPD1. Forms heterooligomers with ATAD3B; this interaction may affect ATAD3A activity. Interacts with CLPB.

The protein resides in the mitochondrion inner membrane. It localises to the mitochondrion matrix. The protein localises to the mitochondrion nucleoid. Its function is as follows. Essential for mitochondrial network organization, mitochondrial metabolism and cell growth at organism and cellular level. May play an important role in mitochondrial protein synthesis. May also participate in mitochondrial DNA replication. May bind to mitochondrial DNA D-loops and contribute to nucleoid stability. Required for enhanced channeling of cholesterol for hormone-dependent steroidogenesis. Involved in mitochondrial-mediated antiviral innate immunity. Also involved in the mitochondrial DNA damage response by promoting signaling between damaged genomes and the mitochondrial membrane, leading to activation of the integrated stress response (ISR). This chain is ATPase family AAA domain-containing protein 3 (ATAD3), found in Bos taurus (Bovine).